The primary structure comprises 449 residues: Required for meiotic nuclear division protein 1 homolog (449 aa).

The transit peptide at 1 to 12 (MPATLLRAVARS) directs the protein to the mitochondrion.

The protein belongs to the RMD1/sif2 family. As to quaternary structure, homooligomer.

Its subcellular location is the mitochondrion. Required for mitochondrial translation, possibly by coordinating the assembly or maintenance of the mitochondrial ribosome. This Homo sapiens (Human) protein is Required for meiotic nuclear division protein 1 homolog (RMND1).